The following is an 809-amino-acid chain: Protein TRC8 homolog (809 aa).

Transmembrane regions (helical) follow at residues 124-144 (TVKF…FMLW), 147-167 (HLVM…SYWS), 200-220 (VMSL…FAYI), 233-253 (MPII…AKVV), 256-276 (LPVV…MQSA), 350-370 (LVDG…ISMF), 392-412 (LGTV…LTSL), 425-445 (LCLL…PILM), 461-481 (ALSV…HLWS), 488-508 (WLLA…VSLA), and 539-559 (SVEF…LIFE). The segment at 621-659 (CAICYQEMYSAKITRCRHFFHGVCLRKWLYVQDRCPLCH) adopts an RING-type; atypical zinc-finger fold. 2 disordered regions span residues 696 to 724 (NNAA…SSSA) and 752 to 788 (VASS…TSAA). Residues 711 to 724 (EASEQAPATSSSSA) show a composition bias toward low complexity.

In terms of assembly, interacts with VHL. Interacts with the MPN domain of CSN5. Interacts with EIF3F and EIF3H.

It is found in the endoplasmic reticulum membrane. Its function is as follows. Plays a role in growth inhibition that is dependent upon COP9 signalosome subunits CSN5 and CSN6. May modulate signalosome levels or compartmentalization. Probably functions in the same or a related pathway to VHL during early midline development. The polypeptide is Protein TRC8 homolog (Drosophila melanogaster (Fruit fly)).